The primary structure comprises 113 residues: ATP-dependent Clp protease adapter protein ClpS (113 aa).

The disordered stretch occupies residues 1–24 (MTAQLHMMSDKHDQDNDASVLLQT).

It belongs to the ClpS family. In terms of assembly, binds to the N-terminal domain of the chaperone ClpA.

Involved in the modulation of the specificity of the ClpAP-mediated ATP-dependent protein degradation. The sequence is that of ATP-dependent Clp protease adapter protein ClpS from Ruegeria pomeroyi (strain ATCC 700808 / DSM 15171 / DSS-3) (Silicibacter pomeroyi).